Reading from the N-terminus, the 515-residue chain is 2-isopropylmalate synthase (515 aa).

One can recognise a Pyruvate carboxyltransferase domain in the interval 5 to 267 (VIIFDTTLRD…DTRINTQEIH (263 aa)). Residues Asp14, His202, His204, and Asn238 each contribute to the Mn(2+) site. Positions 392–515 (VLDKLSAHST…VADIKNHKHH (124 aa)) are regulatory domain.

This sequence belongs to the alpha-IPM synthase/homocitrate synthase family. LeuA type 1 subfamily. As to quaternary structure, homodimer. It depends on Mn(2+) as a cofactor.

The protein resides in the cytoplasm. The enzyme catalyses 3-methyl-2-oxobutanoate + acetyl-CoA + H2O = (2S)-2-isopropylmalate + CoA + H(+). It participates in amino-acid biosynthesis; L-leucine biosynthesis; L-leucine from 3-methyl-2-oxobutanoate: step 1/4. Its function is as follows. Catalyzes the condensation of the acetyl group of acetyl-CoA with 3-methyl-2-oxobutanoate (2-ketoisovalerate) to form 3-carboxy-3-hydroxy-4-methylpentanoate (2-isopropylmalate). The sequence is that of 2-isopropylmalate synthase from Haemophilus influenzae (strain PittEE).